A 403-amino-acid chain; its full sequence is Alpha-1-antiproteinase F (403 aa).

Positions 1 to 22 are cleaved as a signal peptide; sequence SAIPRGLLLLAGLCCLVFGIMA. N-linked (GlcNAc...) asparagine glycans are attached at residues Asn55, Asn92, Asn155, Asn222, and Asn256. Positions 358–377 are RCL; the sequence is GATELEITPHSVPQDLFFNK.

Belongs to the serpin family.

It is found in the secreted. Inhibits elastase, chymotrypsin, cathepsin G, plasmin, and trypsin. In Cavia porcellus (Guinea pig), this protein is Alpha-1-antiproteinase F.